Reading from the N-terminus, the 643-residue chain is Major core protein OPG129 (643 aa).

A propeptide spanning residues 1 to 61 (MEAVVNSDVF…IVDDDFISAG (61 aa)) is cleaved from the precursor.

It belongs to the orthopoxvirus OPG129 family. In terms of processing, the 73-kDa precursor is cleaved to a mature protein of 60 kDa during virion maturation. Proteolytic cleavage of major core proteins OPG129, OPG136, and OPG098, which occurs at a late stage of core formation, is required for production of infectious mature virions (MV).

The protein localises to the virion. Major component of the virion core that undergoes proteolytic processing during the immature virion (IV) to mature virion (MV) transition. Essential for the formation of a structurally normal core. This Vaccinia virus (strain Western Reserve) (VACV) protein is Major core protein OPG129 (OPG129).